The sequence spans 387 residues: Chaperone protein DnaJ (387 aa).

The region spanning 6–70 (DYYEILGLSR…EKRAQYDRFG (65 aa)) is the J domain. The CR-type zinc finger occupies 130 to 212 (GVRKDIDVPR…CSGTGRVRNT (83 aa)). Residues Cys-143, Cys-146, Cys-160, Cys-163, Cys-186, Cys-189, Cys-200, and Cys-203 each coordinate Zn(2+). CXXCXGXG motif repeat units lie at residues 143–150 (CSNCSGTG), 160–167 (CPTCGGTG), 186–193 (CSTCRGKG), and 200–207 (CPVCSGTG). Residues 143-162 (CSNCSGTGARPGTSPKRCPT) form a disordered region.

Belongs to the DnaJ family. In terms of assembly, homodimer. Zn(2+) serves as cofactor.

The protein resides in the cytoplasm. Participates actively in the response to hyperosmotic and heat shock by preventing the aggregation of stress-denatured proteins and by disaggregating proteins, also in an autonomous, DnaK-independent fashion. Unfolded proteins bind initially to DnaJ; upon interaction with the DnaJ-bound protein, DnaK hydrolyzes its bound ATP, resulting in the formation of a stable complex. GrpE releases ADP from DnaK; ATP binding to DnaK triggers the release of the substrate protein, thus completing the reaction cycle. Several rounds of ATP-dependent interactions between DnaJ, DnaK and GrpE are required for fully efficient folding. Also involved, together with DnaK and GrpE, in the DNA replication of plasmids through activation of initiation proteins. The chain is Chaperone protein DnaJ from Methanosarcina thermophila.